The chain runs to 452 residues: MSQILTTRQAEELHKSMVAYLSSLEASKSTAALREELVLPDTFDDATCKKYAGLLEKKFLTCSLKANPSKDNGLSALQILDLESKVAGLQAELSSLTLTSRSKGGQDPDNWLPGPASTRTFESHRDAITCIAFHPIFTSLASSSEDCTIKIWDWELGELERTLKGHIRAVTGLDFGGQKGNTLLASCSSDLTVKLWDPSKGYANIRTLSGHDHSVSAVRFLTSTENLLVSAGRDASIRIWDVSTGYCVKVLRSSDAWIRDISSSFDGKWLVAGGRDQAVTVWEVATAEQKSALLGHENYIECCVIAPPTSYEHLATLAGLKKPPAPSSSCEFIATGARDKTIRLWESRGRLIKTLVGHDNWVRDLVFHPNGKHLISVADDKTIRCWDLSQEGKLVKTIDNAHSHFVTCMRWGPSATTDVETTNGVTNKGTTKSKFQCVIATGSADSCVRVFS.

Residues 76 to 101 (ALQILDLESKVAGLQAELSSLTLTSR) are a coiled coil. WD repeat units follow at residues 123-164 (SHRD…RTLK), 166-206 (HIRA…ANIR), 210-250 (GHDH…CVKV), 253-292 (SSDA…QKSA), 295-355 (GHEN…IKTL), 357-396 (GHDN…KLVK), and 401-449 (AHSH…SCVR).

Belongs to the WD repeat LIS1/nudF family. In terms of assembly, self-associates. Interacts with nudE and dynein.

The protein localises to the cytoplasm. The protein resides in the cytoskeleton. Its subcellular location is the spindle pole. Functionally, positively regulates the activity of the minus-end directed microtubule motor protein dynein. May enhance dynein-mediated microtubule sliding by targeting dynein to the microtubule plus end. Required for nuclear migration during vegetative growth as well as development. Required for retrograde early endosome (EE) transport from the hyphal tip. Required for localization of dynein to the mitotic spindle poles. Recruits additional proteins to the dynein complex at SPBs. In Talaromyces marneffei (strain ATCC 18224 / CBS 334.59 / QM 7333) (Penicillium marneffei), this protein is Nuclear distribution protein nudF 2.